The primary structure comprises 77 residues: DNA-directed RNA polymerase subunit Rpo5 (77 aa).

This sequence belongs to the archaeal Rpo5/eukaryotic RPB5 RNA polymerase subunit family. As to quaternary structure, part of the RNA polymerase complex.

The protein localises to the cytoplasm. It carries out the reaction RNA(n) + a ribonucleoside 5'-triphosphate = RNA(n+1) + diphosphate. Its function is as follows. DNA-dependent RNA polymerase (RNAP) catalyzes the transcription of DNA into RNA using the four ribonucleoside triphosphates as substrates. This is DNA-directed RNA polymerase subunit Rpo5 from Methanothermobacter thermautotrophicus (strain ATCC 29096 / DSM 1053 / JCM 10044 / NBRC 100330 / Delta H) (Methanobacterium thermoautotrophicum).